The primary structure comprises 276 residues: MKGQILREMKVLKAIDPAFEVQRRVAFIKSKLKQSSTTSLVLGISGGVDSSVGGRLCQLAVDELNSESQSSSYQFIAVRLPYDVQKDEDEAQLACQFIQPSKQVTVNVKLGVDGVHSETLAAIEAAGIALPEHDKIDFVKGNVKARMRMVAQYDIAGLVGGLVVGTDHSAENITGFYTKWGDGACDLAPLFGLNKRQVRQLADYLGAPEVLVSKAPTADLEEEHPQQEDEEALGLTYEQIDDFLEGKVVSNFVNDKLISMYLATQHKREPIPTIYD.

Position 43–50 (43–50 (GISGGVDS)) interacts with ATP. D49 contributes to the Mg(2+) binding site. R146 is a binding site for deamido-NAD(+). T166 is a binding site for ATP. E171 provides a ligand contact to Mg(2+). Deamido-NAD(+) contacts are provided by K179 and D186. 2 residues coordinate ATP: K195 and T217. 266 to 267 (HK) is a deamido-NAD(+) binding site.

This sequence belongs to the NAD synthetase family. As to quaternary structure, homodimer.

It catalyses the reaction deamido-NAD(+) + NH4(+) + ATP = AMP + diphosphate + NAD(+) + H(+). It functions in the pathway cofactor biosynthesis; NAD(+) biosynthesis; NAD(+) from deamido-NAD(+) (ammonia route): step 1/1. Catalyzes the ATP-dependent amidation of deamido-NAD to form NAD. Uses ammonia as a nitrogen source. This chain is NH(3)-dependent NAD(+) synthetase, found in Shewanella halifaxensis (strain HAW-EB4).